The chain runs to 449 residues: UDP-N-acetylmuramoylalanine--D-glutamate ligase (449 aa).

118–124 (GTNGKTT) serves as a coordination point for ATP.

This sequence belongs to the MurCDEF family.

It is found in the cytoplasm. It catalyses the reaction UDP-N-acetyl-alpha-D-muramoyl-L-alanine + D-glutamate + ATP = UDP-N-acetyl-alpha-D-muramoyl-L-alanyl-D-glutamate + ADP + phosphate + H(+). It participates in cell wall biogenesis; peptidoglycan biosynthesis. In terms of biological role, cell wall formation. Catalyzes the addition of glutamate to the nucleotide precursor UDP-N-acetylmuramoyl-L-alanine (UMA). The sequence is that of UDP-N-acetylmuramoylalanine--D-glutamate ligase from Staphylococcus aureus (strain MRSA252).